Reading from the N-terminus, the 446-residue chain is Oxysterols receptor LXR-beta (446 aa).

The segment covering 1 to 28 (MSSPTSSLDTPLPGNGSPQPSTSSTSPT) has biased composition (low complexity). The tract at residues 1–69 (MSSPTSSLDT…PERKRKKGPA (69 aa)) is disordered. The transactivation AF-1; required for ligand-independent transactivation function stretch occupies residues 1-76 (MSSPTSSLDT…GPAPKMLGHE (76 aa)). Residues 75–152 (HELCRVCGDK…AGMREQCVLS (78 aa)) constitute a DNA-binding region (nuclear receptor). 2 NR C4-type zinc fingers span residues 78–98 (CRVC…CEGC) and 116–140 (CRGS…LRKC). The disordered stretch occupies residues 160–201 (KIQKQQQQQPPPPTEPASGSSARPAASPGTSEASSQGSGEGE). Residues 175 to 196 (PASGSSARPAASPGTSEASSQG) show a composition bias toward low complexity. Residues 205–446 (LTAAQELMIQ…LLSEIWDVHE (242 aa)) form a transactivation AF-2; required for ligand-dependent transactivation function; mediates interaction with CCAR2 region. Positions 208–446 (AQELMIQQLV…LLSEIWDVHE (239 aa)) constitute an NR LBD domain. Residues Lys395 and Lys433 each participate in a glycyl lysine isopeptide (Lys-Gly) (interchain with G-Cter in SUMO2) cross-link.

It belongs to the nuclear hormone receptor family. NR1 subfamily. As to quaternary structure, forms a heterodimer with RXR. Interacts with CCAR2 (via N-terminus) in a ligand-independent manner. Interacts (when sumoylated) with GPS2; interaction with GPS2 onto hepatic acute phase protein promoters prevents N-Cor corepressor complex dissociation. Interacts with ABCA12 and ABCA1; this interaction is required for ABCA1 localization to the cell surface and is necessary for its normal activity and stability. In terms of processing, sumoylated by SUMO2 at Lys-395 and Lys-433 during the hepatic acute phase response, leading to promote interaction with GPS2 and prevent N-Cor corepressor complex dissociation.

It localises to the nucleus. In terms of biological role, nuclear receptor that exhibits a ligand-dependent transcriptional activation activity. Binds preferentially to double-stranded oligonucleotide direct repeats having the consensus half-site sequence 5'-AGGTCA-3' and 4-nt spacing (DR-4). Regulates cholesterol uptake through MYLIP-dependent ubiquitination of LDLR, VLDLR and LRP8; DLDLR and LRP8. Interplays functionally with RORA for the regulation of genes involved in liver metabolism. Induces LPCAT3-dependent phospholipid remodeling in endoplasmic reticulum (ER) membranes of hepatocytes, driving SREBF1 processing and lipogenesis. Via LPCAT3, triggers the incorporation of arachidonate into phosphatidylcholines of ER membranes, increasing membrane dynamics and enabling triacylglycerols transfer to nascent very low-density lipoprotein (VLDL) particles. Via LPCAT3 also counteracts lipid-induced ER stress response and inflammation, likely by modulating SRC kinase membrane compartmentalization and limiting the synthesis of lipid inflammatory mediators. Plays an anti-inflammatory role during the hepatic acute phase response by acting as a corepressor: inhibits the hepatic acute phase response by preventing dissociation of the N-Cor corepressor complex. In Rattus norvegicus (Rat), this protein is Oxysterols receptor LXR-beta (Nr1h2).